The sequence spans 162 residues: Gas vesicle protein I (162 aa).

Residues 1-162 (MTGKQHQKHE…AERQRGGADE (162 aa)) form a disordered region. Basic and acidic residues-rich tracts occupy residues 22–37 (INRD…QREK) and 47–64 (RQSE…HDTQ). Polar residues-rich tracts occupy residues 65 to 74 (SETQRGTQSK) and 81 to 110 (TGGT…SHST). 2 stretches are compositionally biased toward basic and acidic residues: residues 122–142 (ARER…EDKS) and 151–162 (PKAERQRGGADE).

The protein belongs to the gas vesicle GvpI family. GvpF to GvpM interact with each other in vitro, and may form multi-subunit complex(es). Interacts with GvpC and GvpO.

Its subcellular location is the gas vesicle. Functionally, proteins GvpF to GvpM might be involved in nucleating gas vesicle formation. A minor component of the gas vesicle. Gas vesicles are hollow, gas filled proteinaceous nanostructures found in some microorganisms. They allow positioning of halobacteria at the optimal depth for growth in the poorly aerated, shallow brine pools of their habitat. Expression of a 9.5 kb mc-vac DNA fragment containing 2 divergently transcribed regions (gvpD-gvpE-gvpF-gvpG-gvpH-gvpI-gvpJ-gvpK-gvpL-gvpM and gvpA-gvpC-gvpN-gvpO) allows H.volcanii to produce gas vesicles. The chain is Gas vesicle protein I from Haloferax mediterranei (strain ATCC 33500 / DSM 1411 / JCM 8866 / NBRC 14739 / NCIMB 2177 / R-4) (Halobacterium mediterranei).